We begin with the raw amino-acid sequence, 467 residues long: Ribosome biogenesis protein YTM1 (467 aa).

The segment at 8–95 (IKIKFFTNEE…ETFLSLEYTR (88 aa)) is ubiquitin-like (UBL) domain. Positions 105–467 (SFNNEDWISS…QINKGSDISK (363 aa)) are sufficient for interaction with ERB1 and association with 66S pre-ribosomes. 7 WD repeats span residues 120–159 (KTLP…EKQY), 161–199 (GHSG…GSIP), 216–255 (GHKA…MTTI), 293–333 (SHTQ…CIDT), 335–374 (STGY…NTTE), 382–422 (GHTN…SLYT), and 432–467 (KGAD…DISK).

It belongs to the WD repeat WDR12/YTM1 family. Component of the NOP7 complex, composed of ERB1, NOP7 and YTM1. The complex is held together by ERB1, which interacts with NOP7 via its N-terminal domain and with YTM1 via a high-affinity interaction between the seven-bladed beta-propeller domains of the 2 proteins. The NOP7 complex associates with the 66S pre-ribosome. Interacts (via UBL domain) with MDN1 (via VWFA/MIDAS domain).

It localises to the nucleus. The protein localises to the nucleolus. The protein resides in the nucleoplasm. Component of the NOP7 complex, which is required for maturation of the 25S and 5.8S ribosomal RNAs and formation of the 60S ribosome. This Scheffersomyces stipitis (strain ATCC 58785 / CBS 6054 / NBRC 10063 / NRRL Y-11545) (Yeast) protein is Ribosome biogenesis protein YTM1.